Here is a 604-residue protein sequence, read N- to C-terminus: Elongation factor 4 1 (604 aa).

The tr-type G domain maps to 10–191; that stretch reads EHIRNFCIIA…AIVDSVPAPT (182 aa). GTP-binding positions include 22-27 and 138-141; these read DHGKST and NKID.

Belongs to the TRAFAC class translation factor GTPase superfamily. Classic translation factor GTPase family. LepA subfamily.

The protein localises to the cell inner membrane. It carries out the reaction GTP + H2O = GDP + phosphate + H(+). Functionally, required for accurate and efficient protein synthesis under certain stress conditions. May act as a fidelity factor of the translation reaction, by catalyzing a one-codon backward translocation of tRNAs on improperly translocated ribosomes. Back-translocation proceeds from a post-translocation (POST) complex to a pre-translocation (PRE) complex, thus giving elongation factor G a second chance to translocate the tRNAs correctly. Binds to ribosomes in a GTP-dependent manner. This is Elongation factor 4 1 from Rhodopirellula baltica (strain DSM 10527 / NCIMB 13988 / SH1).